Reading from the N-terminus, the 282-residue chain is ATP synthase gamma chain (282 aa).

This sequence belongs to the ATPase gamma chain family. In terms of assembly, F-type ATPases have 2 components, CF(1) - the catalytic core - and CF(0) - the membrane proton channel. CF(1) has five subunits: alpha(3), beta(3), gamma(1), delta(1), epsilon(1). CF(0) has three main subunits: a, b and c.

It is found in the cell membrane. Functionally, produces ATP from ADP in the presence of a proton gradient across the membrane. The gamma chain is believed to be important in regulating ATPase activity and the flow of protons through the CF(0) complex. The chain is ATP synthase gamma chain from Clostridium botulinum (strain Loch Maree / Type A3).